The chain runs to 146 residues: 3-dehydroquinate dehydratase (146 aa).

Catalysis depends on Y23, which acts as the Proton acceptor. 3 residues coordinate substrate: N74, H80, and D87. H100 serves as the catalytic Proton donor. Substrate is bound by residues I101–S102 and R111.

The protein belongs to the type-II 3-dehydroquinase family. Homododecamer.

It catalyses the reaction 3-dehydroquinate = 3-dehydroshikimate + H2O. It participates in metabolic intermediate biosynthesis; chorismate biosynthesis; chorismate from D-erythrose 4-phosphate and phosphoenolpyruvate: step 3/7. Catalyzes a trans-dehydration via an enolate intermediate. The protein is 3-dehydroquinate dehydratase of Bacillus cereus (strain G9842).